The chain runs to 34 residues: MSDINTARLPYVVFMSFIPPCVNDDIQVVLTRGE.

Positions 1 to 10 (MSDINTARLP) are excised as a propeptide. A cross-link (cyclopeptide (Tyr-Pro)) is located at residues 11 to 20 (YVVFMSFIPP). A propeptide spanning residues 21 to 34 (CVNDDIQVVLTRGE) is cleaved from the precursor.

Belongs to the MSDIN fungal toxin family. Post-translationally, processed by the macrocyclase-peptidase enzyme POPB to yield a toxic cyclic decapeptide. POPB first removes 10 residues from the N-terminus. Conformational trapping of the remaining peptide forces the enzyme to release this intermediate rather than proceed to macrocyclization. The enzyme rebinds the remaining peptide in a different conformation and catalyzes macrocyclization of the N-terminal 10 residues.

Functionally, probable toxin that belongs to the MSDIN-like toxin family responsible for a large number of food poisoning cases and deaths. The sequence is that of MSDIN-like toxin proprotein 5 from Amanita bisporigera (Destroying angel).